A 357-amino-acid chain; its full sequence is N-acetyl-gamma-glutamyl-phosphate reductase (357 aa).

Residue Cys160 is part of the active site.

The protein belongs to the NAGSA dehydrogenase family. Type 1 subfamily.

It localises to the cytoplasm. The enzyme catalyses N-acetyl-L-glutamate 5-semialdehyde + phosphate + NADP(+) = N-acetyl-L-glutamyl 5-phosphate + NADPH + H(+). It participates in amino-acid biosynthesis; L-arginine biosynthesis; N(2)-acetyl-L-ornithine from L-glutamate: step 3/4. Catalyzes the NADPH-dependent reduction of N-acetyl-5-glutamyl phosphate to yield N-acetyl-L-glutamate 5-semialdehyde. The polypeptide is N-acetyl-gamma-glutamyl-phosphate reductase (Prochlorococcus marinus (strain MIT 9313)).